We begin with the raw amino-acid sequence, 669 residues long: NAD-dependent malic enzyme, mitochondrial (669 aa).

Over residues 33–43 the composition is skewed to polar residues; it reads IQQSRLYSSNT. Residues 33–68 form a disordered region; sequence IQQSRLYSSNTRSHKATTTRENTFQKPYSDEEVTKT. Fumarate is bound at residue Arg142. The active-site Proton donor is the Tyr187. Catalysis depends on Lys259, which acts as the Proton acceptor. Glu330, Asp331, and Asp354 together coordinate a divalent metal cation. Positions 387 and 390 each coordinate NAD(+). Asn499 and Asn539 together coordinate (S)-malate.

This sequence belongs to the malic enzymes family. Requires Mg(2+) as cofactor. The cofactor is Mn(2+).

The protein resides in the mitochondrion matrix. It carries out the reaction (S)-malate + NAD(+) = pyruvate + CO2 + NADH. It catalyses the reaction oxaloacetate + H(+) = pyruvate + CO2. NAD-dependent mitochondrial malic enzyme that catalyzes the oxidative decarboxylation of malate to pyruvate. The sequence is that of NAD-dependent malic enzyme, mitochondrial (MAE1) from Saccharomyces cerevisiae (strain ATCC 204508 / S288c) (Baker's yeast).